Reading from the N-terminus, the 227-residue chain is Cytochrome c oxidase subunit 2 (227 aa).

Residues 1 to 14 are Mitochondrial intermembrane-facing; that stretch reads MAYPFQLGLQDATS. A helical membrane pass occupies residues 15–45; it reads PIMEELANFHDHTLMIVFLISSLVLYIISSM. Residues 46-59 are Mitochondrial matrix-facing; it reads LTTKLTHTSTMDAQ. Residues 60–87 traverse the membrane as a helical segment; that stretch reads EVETIWTILPAVILILIALPSLRILYMM. The Mitochondrial intermembrane portion of the chain corresponds to 88-227; it reads DEINNPALTV…HFENWSASMI (140 aa). 6 residues coordinate Cu cation: His161, Cys196, Glu198, Cys200, His204, and Met207. Glu198 provides a ligand contact to Mg(2+).

Belongs to the cytochrome c oxidase subunit 2 family. In terms of assembly, component of the cytochrome c oxidase (complex IV, CIV), a multisubunit enzyme composed of 14 subunits. The complex is composed of a catalytic core of 3 subunits MT-CO1, MT-CO2 and MT-CO3, encoded in the mitochondrial DNA, and 11 supernumerary subunits COX4I, COX5A, COX5B, COX6A, COX6B, COX6C, COX7A, COX7B, COX7C, COX8 and NDUFA4, which are encoded in the nuclear genome. The complex exists as a monomer or a dimer and forms supercomplexes (SCs) in the inner mitochondrial membrane with NADH-ubiquinone oxidoreductase (complex I, CI) and ubiquinol-cytochrome c oxidoreductase (cytochrome b-c1 complex, complex III, CIII), resulting in different assemblies (supercomplex SCI(1)III(2)IV(1) and megacomplex MCI(2)III(2)IV(2)). Found in a complex with TMEM177, COA6, COX18, COX20, SCO1 and SCO2. Interacts with TMEM177 in a COX20-dependent manner. Interacts with COX20. Interacts with COX16. It depends on Cu cation as a cofactor.

The protein resides in the mitochondrion inner membrane. It catalyses the reaction 4 Fe(II)-[cytochrome c] + O2 + 8 H(+)(in) = 4 Fe(III)-[cytochrome c] + 2 H2O + 4 H(+)(out). In terms of biological role, component of the cytochrome c oxidase, the last enzyme in the mitochondrial electron transport chain which drives oxidative phosphorylation. The respiratory chain contains 3 multisubunit complexes succinate dehydrogenase (complex II, CII), ubiquinol-cytochrome c oxidoreductase (cytochrome b-c1 complex, complex III, CIII) and cytochrome c oxidase (complex IV, CIV), that cooperate to transfer electrons derived from NADH and succinate to molecular oxygen, creating an electrochemical gradient over the inner membrane that drives transmembrane transport and the ATP synthase. Cytochrome c oxidase is the component of the respiratory chain that catalyzes the reduction of oxygen to water. Electrons originating from reduced cytochrome c in the intermembrane space (IMS) are transferred via the dinuclear copper A center (CU(A)) of subunit 2 and heme A of subunit 1 to the active site in subunit 1, a binuclear center (BNC) formed by heme A3 and copper B (CU(B)). The BNC reduces molecular oxygen to 2 water molecules using 4 electrons from cytochrome c in the IMS and 4 protons from the mitochondrial matrix. This chain is Cytochrome c oxidase subunit 2 (MT-CO2), found in Malacomys longipes (Big-eared swamp rat).